A 477-amino-acid polypeptide reads, in one-letter code: E3 ubiquitin-protein ligase TRIM17 (477 aa).

The segment at 16 to 66 adopts an RING-type zinc-finger fold; the sequence is CSICLDYFTDPVMTACGHNFCRECIQMSWEKGKGKKGKKKQKGSFPCPECR. The segment at 94–135 adopts a B box-type zinc-finger fold; sequence HKRDLCQIHQEPLKLFCQDDQTPICVVCREAQEHRMHRVLPL. The Zn(2+) site is built by Cys-99, His-102, Cys-121, and His-127. The stretch at 135-225 forms a coiled coil; sequence LDEAAREYKL…GKLQDSKASL (91 aa). A B30.2/SPRY domain is found at 276–475; it reads AIKTVCRVPG…MVISTVTMWV (200 aa).

This sequence belongs to the TRIM/RBCC family. In terms of assembly, interacts (via coiled coil) with TRIM44 (via coiled coil). Interacts with TRIM28; this interaction prevents TRIM28 activity on BCL2A1. Interacts with TRIM41; this interaction prevents TRIM41 activity on ZSCAN2. Interacts with BECN1. Interacts with NFATC3 and NFATC4; these interactions prevent NFATC3 and NFATC4 nuclear localization. Post-translationally, auto-ubiquitinated. As to expression, expressed almost exclusively in the testis.

Its subcellular location is the cytoplasm. The protein localises to the lysosome. It catalyses the reaction S-ubiquitinyl-[E2 ubiquitin-conjugating enzyme]-L-cysteine + [acceptor protein]-L-lysine = [E2 ubiquitin-conjugating enzyme]-L-cysteine + N(6)-ubiquitinyl-[acceptor protein]-L-lysine.. It functions in the pathway protein modification; protein ubiquitination. E3 ubiquitin ligase that plays important roles in the regulation of neuronal apoptosis, selective autophagy or cell proliferation. Stimulates the degradation of kinetochore ZW10 interacting protein ZWINT in a proteasome-dependent manner, leading to negative regulation of cell proliferation. Inhibits autophagic degradation of diverse known targets while contributing to autophagy of midbodies. Autophagy-inhibitory activity involves MCL1, which TRIM17 assembles into complexes with the key autophagy regulator BECN1. Controls neuronal apoptosis by mediating ubiquitination and degradation of MCL1 to initiate neuronal death. In addition, regulates NFAT transcription factors NFATC3 and NFATC4 activities by preventing their nuclear localization, thus inhibiting their transcriptional activities. Decreases TRIM41-mediated degradation of ZSCAN2 thereby stimulating alpha-synuclein/SNCA transcription in neuronal cells. Prevents the E3 ubiquitin-ligase activity of TRIM28 and its interaction with anti-apoptotic BCL2A1, blocking TRIM28 from ubiquitinating BCL2A1. The protein is E3 ubiquitin-protein ligase TRIM17 (Trim17) of Rattus norvegicus (Rat).